A 286-amino-acid chain; its full sequence is NADH-cytochrome b5 reductase 1 (286 aa).

A helical membrane pass occupies residues 6-26 (FILVIIGSVALAAGVKYVFTL). Residues 52 to 155 (QEYRKFQLKE…KGPKGKFNYQ (104 aa)) form the FAD-binding FR-type domain. FAD-binding positions include 135–150 (DNMF…GPKG) and 161–193 (SIGM…EISL).

This sequence belongs to the flavoprotein pyridine nucleotide cytochrome reductase family. As to quaternary structure, monomer. Requires FAD as cofactor.

The protein localises to the endoplasmic reticulum membrane. Its subcellular location is the mitochondrion outer membrane. It catalyses the reaction 2 Fe(III)-[cytochrome b5] + NADH = 2 Fe(II)-[cytochrome b5] + NAD(+) + H(+). Electron donor reductase for cytochrome b5. The cytochrome b5/NADH cytochrome b5 reductase electron transfer system supports the catalytic activity of several sterol biosynthetic enzymes. This is NADH-cytochrome b5 reductase 1 (cyb5r1) from Dictyostelium discoideum (Social amoeba).